The chain runs to 310 residues: MKVAVIGAAGGIGQALALLLKNRLPAGSDLALYDIAPVTPGVAADLSHIPTHVSIKGYAGEDPTPALEGADVVLISAGVARKPGMDRADLFNVNAGIVKSLAERIAVVCPNACIGIITNPVNTTVPIAAEVLKKAGVYDKRKLFGVTTLDVIRSETFVAELKGQDPGEVRVPVIGGHSGVTILPLLSQVEGVEFSDEEIAALTKRIQNAGTEVVEAKAGGGSATLSMGQAACRFGLALVKALQGEEVIEYAYVEGNGEHASFFAQPVKLGKEGVEEILPYGELSDFEKAALDGMLETLNSDIQIGVDFVK.

NAD(+)-binding positions include 7-13 (GAAGGIG) and aspartate 34. Residues arginine 81 and arginine 87 each coordinate substrate. NAD(+) contacts are provided by residues asparagine 94 and 117 to 119 (ITN). Substrate-binding residues include asparagine 119 and arginine 153. The active-site Proton acceptor is the histidine 177. Methionine 227 is an NAD(+) binding site.

It belongs to the LDH/MDH superfamily. MDH type 1 family. Homodimer.

It carries out the reaction (S)-malate + NAD(+) = oxaloacetate + NADH + H(+). Catalyzes the reversible oxidation of malate to oxaloacetate. The polypeptide is Malate dehydrogenase (Vibrio vulnificus (strain CMCP6)).